The primary structure comprises 200 residues: Small ribosomal subunit protein eS1 (200 aa).

It belongs to the eukaryotic ribosomal protein eS1 family.

The chain is Small ribosomal subunit protein eS1 from Thermococcus onnurineus (strain NA1).